The sequence spans 575 residues: Cytochrome P450 monooxygenase opaB (575 aa).

Asparagine 6 carries N-linked (GlcNAc...) asparagine glycosylation. The helical transmembrane segment at 37–57 (FILAAILASIILLIIRNSMLS) threads the bilayer. Residues asparagine 83 and asparagine 242 are each glycosylated (N-linked (GlcNAc...) asparagine). Residue cysteine 521 participates in heme binding.

It belongs to the cytochrome P450 family. The cofactor is heme.

It localises to the membrane. The protein operates within secondary metabolite biosynthesis. Cytochrome P450 monooxygenase; part of the gene cluster that mediates the biosynthesis of oxepinamides, derivatives of anthranilyl-containing tripeptides that share an oxepin ring and a fused pyrimidinone moiety. The nonribosomal peptide synthetase (NRPS) opaA assembles the quinazolinone core with D-Phe incorporation. The first adenylation domain (A1) of opaA loads and activates anthranilic acid whereas the second A domain (A2) is for activating of L-Phe, which is then converted to D-form by the E domain. The third A domain (A3) is responsible for L-Ile activation and the terminal condensation domain C3 for cyclization and releasing the NRPS product protuboxepin K. The cytochrome P450 monooxygenase opaB then catalyzes alone the oxepin ring formation to convert protuboxepin K into protuboxepin A. The flavoenzyme opaC installs subsequently one hydroxyl group at the oxepin ring, accompanied by double bond migration, to form 15-epi-oxepinamide E. The epimerase opaE changes the D-Phe residue back to L-form, leading to oxepinamide E, which is further methylated at the hydroxyl group at C-12 by the O-methyltransferase OpaF to yield oxepinamide F. The sequence is that of Cytochrome P450 monooxygenase opaB from Aspergillus ustus.